A 485-amino-acid polypeptide reads, in one-letter code: Probable carboxypeptidase S-like 1 (485 aa).

The signal sequence occupies residues 1 to 21 (MIFKFFFIFFLIILVIKISES). H111 contributes to the Zn(2+) binding site. Residue D113 is part of the active site. Residue D142 participates in Zn(2+) binding. E177 acts as the Proton acceptor in catalysis. 3 residues coordinate Zn(2+): E178, D204, and H431.

The protein belongs to the peptidase M20A family. It depends on Zn(2+) as a cofactor.

It is found in the secreted. The sequence is that of Probable carboxypeptidase S-like 1 from Dictyostelium discoideum (Social amoeba).